Reading from the N-terminus, the 306-residue chain is Non-specific ribonucleoside hydrolase RihC (306 aa).

The active site involves His235.

It belongs to the IUNH family. RihC subfamily.

Functionally, hydrolyzes both purine and pyrimidine ribonucleosides with a broad-substrate specificity. The sequence is that of Non-specific ribonucleoside hydrolase RihC from Salmonella dublin (strain CT_02021853).